Reading from the N-terminus, the 217-residue chain is uncharacterized protein (217 aa).

This is an uncharacterized protein from Methanothermobacter thermautotrophicus (Methanobacterium thermoformicicum).